The primary structure comprises 351 residues: Probable minor fimbrial subunit LpfD (351 aa).

Residues methionine 1–alanine 22 form the signal peptide.

The protein belongs to the fimbrial protein family.

It localises to the fimbrium. In terms of biological role, part of the lpfABCC'DE fimbrial operon. LP fimbriae may participate in the interaction with eukaryotic cells by assisting in microcolony formation. In Escherichia coli O157:H7, this protein is Probable minor fimbrial subunit LpfD (lpfD).